The sequence spans 271 residues: uncharacterized protein (271 aa).

The first 22 residues, 1–22, serve as a signal peptide directing secretion; it reads MIHSKRLKLCLCLIILSVFIGA. The N-palmitoyl cysteine moiety is linked to residue C23. C23 carries S-diacylglycerol cysteine lipidation.

The protein belongs to the staphylococcal tandem lipoprotein family.

It is found in the cell membrane. This is an uncharacterized protein from Staphylococcus aureus (strain MW2).